Consider the following 188-residue polypeptide: Protein GrpE (188 aa).

Residues 1–16 (MEERNEQVVEEVKEAQ) show a composition bias toward basic and acidic residues. The tract at residues 1-31 (MEERNEQVVEEVKEAQVEEAVTPENSEETVE) is disordered.

Belongs to the GrpE family. As to quaternary structure, homodimer.

The protein resides in the cytoplasm. In terms of biological role, participates actively in the response to hyperosmotic and heat shock by preventing the aggregation of stress-denatured proteins, in association with DnaK and GrpE. It is the nucleotide exchange factor for DnaK and may function as a thermosensor. Unfolded proteins bind initially to DnaJ; upon interaction with the DnaJ-bound protein, DnaK hydrolyzes its bound ATP, resulting in the formation of a stable complex. GrpE releases ADP from DnaK; ATP binding to DnaK triggers the release of the substrate protein, thus completing the reaction cycle. Several rounds of ATP-dependent interactions between DnaJ, DnaK and GrpE are required for fully efficient folding. The polypeptide is Protein GrpE (Bacillus cereus (strain G9842)).